Reading from the N-terminus, the 282-residue chain is MNYIYLISAALGLIGGVSGIDCGVKELKEYDFESIKGIHSVTTLKDTPPTQTNVTWYIGICDTISEKIDHCPKNSDLCGITSINLEKNSNKDAVVSEIVGFNTNLQKQYKPFTKDGDNNEDGITIVYKGANWGDNLVDAELRFVCASSSDKDKDLDKFQLHQWDDKRLKVSVKTKAACITDKKDKKKPDNKKDNKKGNDKDDNGESWGWFTWIFIFLVLFLSIYIVGGAWFQYSKGNAIDFQSALREVLENFVSLLKGLPSFVREIIEKFTGNSNRGEYSAV.

The N-terminal stretch at 1–19 (MNYIYLISAALGLIGGVSG) is a signal peptide. One can recognise an MRH domain in the interval 20–180 (IDCGVKELKE…SVKTKAACIT (161 aa)). Over 20–206 (IDCGVKELKE…GNDKDDNGES (187 aa)) the chain is Lumenal. Disulfide bonds link Cys-22–Cys-61, Cys-71–Cys-78, and Cys-145–Cys-178. The N-linked (GlcNAc...) asparagine glycan is linked to Asn-53. The chain crosses the membrane as a helical span at residues 207 to 227 (WGWFTWIFIFLVLFLSIYIVG). Residues 228–282 (GAWFQYSKGNAIDFQSALREVLENFVSLLKGLPSFVREIIEKFTGNSNRGEYSAV) lie on the Cytoplasmic side of the membrane.

This sequence belongs to the ATG27 family.

The protein localises to the cytoplasmic vesicle membrane. It is found in the golgi apparatus membrane. The protein resides in the mitochondrion membrane. Its subcellular location is the preautophagosomal structure membrane. Effector of VPS34 phosphatidylinositol 3-phosphate kinase signaling. Regulates the cytoplasm to vacuole transport (Cvt) vesicle formation. Plays a role in ATG protein retrieval from the pre-autophagosomal structure (PAS) and is especially required for autophagy-dependent cycling of ATG9. In Debaryomyces hansenii (strain ATCC 36239 / CBS 767 / BCRC 21394 / JCM 1990 / NBRC 0083 / IGC 2968) (Yeast), this protein is Autophagy-related protein 27 (ATG27).